A 71-amino-acid polypeptide reads, in one-letter code: Ceratotoxin-D (71 aa).

The N-terminal stretch at 1-23 is a signal peptide; that stretch reads MANLKAVFLICILAFIAFHCVVG. The propeptide occupies 24–35; sequence APTAEDSIVVKR.

As to quaternary structure, homomer of four to six subunits.

It is found in the secreted. Functionally, female-specific peptides with potent activity against Gram-positive and Gram-negative bacteria. They have as well hemolytic activity. The polypeptide is Ceratotoxin-D (CTXD) (Ceratitis capitata (Mediterranean fruit fly)).